A 133-amino-acid chain; its full sequence is Putative esterase STK_17900 (133 aa).

The protein belongs to the thioesterase PaaI family.

In Sulfurisphaera tokodaii (strain DSM 16993 / JCM 10545 / NBRC 100140 / 7) (Sulfolobus tokodaii), this protein is Putative esterase STK_17900.